We begin with the raw amino-acid sequence, 91 residues long: Small ubiquitin-related modifier (91 aa).

Positions 13-91 (EYIKIKVVGQ…EVYQEQLGGF (79 aa)) constitute a Ubiquitin-like domain. Gly90 participates in a covalent cross-link: Glycyl lysine isopeptide (Gly-Lys) (interchain with K-? in acceptor proteins). Phe91 is a propeptide.

The protein belongs to the ubiquitin family. SUMO subfamily. Covalently attached to tbx-2. Covalently attached to lin-1. Covalently attached to lin-11. Covalently attached to sop-2. Covalently attached to bet-1. Post-translationally, cleavage of precursor form by ulp-1 is necessary for function.

The protein localises to the cytoplasm. It is found in the nucleus. It localises to the cytoskeleton. Its subcellular location is the spindle. The protein resides in the chromosome. The protein localises to the microtubule organizing center. It is found in the centrosome. In terms of biological role, ubiquitin-like protein which can be covalently attached to target lysines as a monomer. Does not seem to be involved in protein degradation and may function as an antagonist of ubiquitin in the degradation process. Plays a role in a number of cellular processes such as nuclear transport, DNA replication and repair, mitosis and signal transduction. Covalent attachment to its substrates requires prior activation by the E1 complex aos-1-uba-2 and linkage to the E2 enzyme ubc-9, and can be promoted by an E3 ligase such as gei-17. Required for embryonic development, fertility, vulval morphogenesis and inhibition of vulval cell fates. Probably by sumoylating bet-1, prevents muscle myosin depletion in aging adults probably by preventing myoblast growth factor receptor egl-15 overexpression. Plays a role in the attenuation of the let-60/ras pathway. Plays a role in male tail tip morphogenesis. Plays a role in the mitochondrial stress response with its covalent attachment to transcription factors dve-1 and afts-1 negatively regulating the mitochondrial unfolded protein response. In Caenorhabditis elegans, this protein is Small ubiquitin-related modifier.